The sequence spans 273 residues: UPF0380 protein YfjQ (273 aa).

Belongs to the UPF0380 family.

This chain is UPF0380 protein YfjQ (yfjQ), found in Escherichia coli (strain K12).